The primary structure comprises 387 residues: Succinate--CoA ligase [ADP-forming] subunit beta (387 aa).

The region spanning 9–236 is the ATP-grasp domain; the sequence is KELFAKHNVP…RDATDPLELK (228 aa). Residues K45, 52 to 54, S94, and E99 contribute to the ATP site; that span reads GRG. The Mg(2+) site is built by N191 and D205. Substrate contacts are provided by residues N256 and 318–320; that span reads GIT.

The protein belongs to the succinate/malate CoA ligase beta subunit family. Heterotetramer of two alpha and two beta subunits. The cofactor is Mg(2+).

The enzyme catalyses succinate + ATP + CoA = succinyl-CoA + ADP + phosphate. The catalysed reaction is GTP + succinate + CoA = succinyl-CoA + GDP + phosphate. The protein operates within carbohydrate metabolism; tricarboxylic acid cycle; succinate from succinyl-CoA (ligase route): step 1/1. Succinyl-CoA synthetase functions in the citric acid cycle (TCA), coupling the hydrolysis of succinyl-CoA to the synthesis of either ATP or GTP and thus represents the only step of substrate-level phosphorylation in the TCA. The beta subunit provides nucleotide specificity of the enzyme and binds the substrate succinate, while the binding sites for coenzyme A and phosphate are found in the alpha subunit. This chain is Succinate--CoA ligase [ADP-forming] subunit beta, found in Mycobacterium sp. (strain JLS).